The chain runs to 174 residues: MKLHDLKPALGAHRKRKRIGRGIGSGKGKTGGKGMMGQKARSGPNPSPSFEGGQMRITRKMPKLRGFKNRWRIEYQIINTGQLNNVPDGTELTINAMIEQGWVQPAKPVKILGDGELERKLTIHAHKFSASARARIEAAGGAAIETPWIVERRSRSRGPNPPRHHRKAEATPGA.

Disordered regions lie at residues 1–56 and 150–174; these read MKLH…GQMR and VERR…TPGA. The segment covering 21-35 has biased composition (gly residues); that stretch reads RGIGSGKGKTGGKGM.

It belongs to the universal ribosomal protein uL15 family. As to quaternary structure, part of the 50S ribosomal subunit.

Its function is as follows. Binds to the 23S rRNA. The sequence is that of Large ribosomal subunit protein uL15 from Roseiflexus castenholzii (strain DSM 13941 / HLO8).